Here is a 465-residue protein sequence, read N- to C-terminus: ATP-dependent rRNA helicase rrp3 (465 aa).

The interval 1–46 (MSALKKRKITEKQPETNSDSEAESVSSRGSAKDETQTSGEEPAPAK) is disordered. The span at 15-29 (ETNSDSEAESVSSRG) shows a compositional bias: polar residues. A Q motif motif is present at residues 46 to 74 (KSFKELGIIDQLCEACENMGYKAPTPIQS). Residues 77-248 (IPLALEGRDV…RASLSNPVRV (172 aa)) form the Helicase ATP-binding domain. 90 to 97 (AETGSGKT) provides a ligand contact to ATP. The short motif at 196–199 (DEAD) is the DEAD box element. Positions 275 to 419 (YLVYLLNEFA…EYQVEKDEVM (145 aa)) constitute a Helicase C-terminal domain. The segment at 436 to 465 (MKSFDEKKGARGKKFGKGKRSRDDMDQEEG) is disordered. Basic residues predominate over residues 445–455 (ARGKKFGKGKR).

The protein belongs to the DEAD box helicase family. DDX47/RRP3 subfamily. As to quaternary structure, interacts with the SSU processome.

It is found in the nucleus. It carries out the reaction ATP + H2O = ADP + phosphate + H(+). ATP-dependent rRNA helicase required for pre-ribosomal RNA processing. Involved in the maturation of the 35S-pre-rRNA and to its cleavage to mature 18S rRNA. The protein is ATP-dependent rRNA helicase rrp3 of Emericella nidulans (strain FGSC A4 / ATCC 38163 / CBS 112.46 / NRRL 194 / M139) (Aspergillus nidulans).